Reading from the N-terminus, the 227-residue chain is 2,3-bisphosphoglycerate-dependent phosphoglycerate mutase (227 aa).

Residues 7 to 14 (RHGFSEWN), 20 to 21 (TG), Arg59, 86 to 89 (ERHY), Lys97, 113 to 114 (RR), and 182 to 183 (GN) each bind substrate. The active-site Tele-phosphohistidine intermediate is His8. The active-site Proton donor/acceptor is Glu86.

Belongs to the phosphoglycerate mutase family. BPG-dependent PGAM subfamily. As to quaternary structure, homodimer.

The catalysed reaction is (2R)-2-phosphoglycerate = (2R)-3-phosphoglycerate. Its pathway is carbohydrate degradation; glycolysis; pyruvate from D-glyceraldehyde 3-phosphate: step 3/5. Its function is as follows. Catalyzes the interconversion of 2-phosphoglycerate and 3-phosphoglycerate. This chain is 2,3-bisphosphoglycerate-dependent phosphoglycerate mutase, found in Haemophilus influenzae (strain 86-028NP).